A 339-amino-acid chain; its full sequence is NADH-quinone oxidoreductase subunit H (339 aa).

9 helical membrane-spanning segments follow: residues 9–29 (IFPL…LILC), 50–70 (PNVV…KLLF), 82–102 (ILFI…WAVI), 115–135 (VGVL…IIAG), 161–181 (MGLV…SGII), 187–207 (MPWW…ISVL), 235–255 (MGFA…SAMT), 275–295 (IPGF…FLWI), and 311–331 (GWKV…SVLV).

Belongs to the complex I subunit 1 family. NDH-1 is composed of 14 different subunits. Subunits NuoA, H, J, K, L, M, N constitute the membrane sector of the complex.

The protein resides in the cell inner membrane. The enzyme catalyses a quinone + NADH + 5 H(+)(in) = a quinol + NAD(+) + 4 H(+)(out). NDH-1 shuttles electrons from NADH, via FMN and iron-sulfur (Fe-S) centers, to quinones in the respiratory chain. The immediate electron acceptor for the enzyme in this species is believed to be ubiquinone. Couples the redox reaction to proton translocation (for every two electrons transferred, four hydrogen ions are translocated across the cytoplasmic membrane), and thus conserves the redox energy in a proton gradient. This subunit may bind ubiquinone. The polypeptide is NADH-quinone oxidoreductase subunit H (Rickettsia conorii (strain ATCC VR-613 / Malish 7)).